A 246-amino-acid polypeptide reads, in one-letter code: 3-deoxy-manno-octulosonate cytidylyltransferase (246 aa).

This sequence belongs to the KdsB family.

The protein resides in the cytoplasm. It catalyses the reaction 3-deoxy-alpha-D-manno-oct-2-ulosonate + CTP = CMP-3-deoxy-beta-D-manno-octulosonate + diphosphate. It participates in nucleotide-sugar biosynthesis; CMP-3-deoxy-D-manno-octulosonate biosynthesis; CMP-3-deoxy-D-manno-octulosonate from 3-deoxy-D-manno-octulosonate and CTP: step 1/1. It functions in the pathway bacterial outer membrane biogenesis; lipopolysaccharide biosynthesis. In terms of biological role, activates KDO (a required 8-carbon sugar) for incorporation into bacterial lipopolysaccharide in Gram-negative bacteria. The chain is 3-deoxy-manno-octulosonate cytidylyltransferase from Rickettsia conorii (strain ATCC VR-613 / Malish 7).